Consider the following 150-residue polypeptide: UPF0756 membrane protein NT05HA_0561 (150 aa).

The next 4 membrane-spanning stretches (helical) occupy residues 1–21, 52–72, 81–101, and 128–148; these read MSLQ…LGIF, YGLS…LVSG, AFVS…AWLA, and FLGG…VLIG.

This sequence belongs to the UPF0756 family.

It is found in the cell membrane. In Aggregatibacter aphrophilus (strain NJ8700) (Haemophilus aphrophilus), this protein is UPF0756 membrane protein NT05HA_0561.